A 211-amino-acid chain; its full sequence is Phosphoheptose isomerase (211 aa).

The region spanning 50-211 is the SIS domain; sequence IAGTFEDGGK…VERMLGYCRL (162 aa). 65-67 contacts substrate; sequence NGG. Zn(2+)-binding residues include H74 and E78. Residues E78, 109-110, 135-137, S140, and Q188 each bind substrate; these read ND and STS. 2 residues coordinate Zn(2+): Q188 and H196.

Belongs to the SIS family. GmhA subfamily. Zn(2+) serves as cofactor.

It localises to the cytoplasm. It catalyses the reaction 2 D-sedoheptulose 7-phosphate = D-glycero-alpha-D-manno-heptose 7-phosphate + D-glycero-beta-D-manno-heptose 7-phosphate. Its pathway is carbohydrate biosynthesis; D-glycero-D-manno-heptose 7-phosphate biosynthesis; D-glycero-alpha-D-manno-heptose 7-phosphate and D-glycero-beta-D-manno-heptose 7-phosphate from sedoheptulose 7-phosphate: step 1/1. Functionally, catalyzes the isomerization of sedoheptulose 7-phosphate in D-glycero-D-manno-heptose 7-phosphate. The polypeptide is Phosphoheptose isomerase (Pelodictyon phaeoclathratiforme (strain DSM 5477 / BU-1)).